Consider the following 149-residue polypeptide: Transcriptional repressor NrdR (149 aa).

A zinc finger spans residues 3–34; sequence CPFCQSDDTKVLDTRLIDDGSQVRRRRECVSC. Positions 49-139 constitute an ATP-cone domain; sequence PHLIKSDDSR…VYRQFQDIEA (91 aa).

This sequence belongs to the NrdR family. The cofactor is Zn(2+).

Negatively regulates transcription of bacterial ribonucleotide reductase nrd genes and operons by binding to NrdR-boxes. The chain is Transcriptional repressor NrdR from Ruthia magnifica subsp. Calyptogena magnifica.